A 65-amino-acid polypeptide reads, in one-letter code: Beta-defensin 106A (65 aa).

The signal sequence occupies residues 1-20 (MRTFLFLFAVLFFLTPAKNE). 3 cysteine pairs are disulfide-bonded: C26–C53, C33–C47, and C37–C54.

It belongs to the beta-defensin family. As to quaternary structure, monomer. Interacts with CCR2 (via extracellular N-terminal region); this interaction may preferentially require specific tyrosine sulfation on CCR2.

The protein resides in the secreted. It localises to the membrane. In terms of biological role, has antibacterial activity. Acts as a ligand for C-C chemokine receptor CCR2. The polypeptide is Beta-defensin 106A (DEFB106A) (Pongo pygmaeus (Bornean orangutan)).